A 108-amino-acid chain; its full sequence is METSNLISYDDVIDAAYDIFLEMASESLEPVDVILFTAQFDDRGAAEAVETRDDWSSHVGFDVDKELYAEVRIGLVNEENDQLDDVFARMLISRDPDHKFCHILWKRD.

The protein belongs to the putative dsDNA mimic protein family.

Its function is as follows. May act as a double-stranded DNA (dsDNA) mimic. Probably regulates the activity of a dsDNA-binding protein. This Photobacterium profundum (strain SS9) protein is Putative double-stranded DNA mimic protein PBPRA1522.